We begin with the raw amino-acid sequence, 377 residues long: Unsaturated 3S-rhamnoglycuronyl hydrolase (377 aa).

Positions 1–25 (MKNQALKILTLCVLVGSAMSLKLYA) are cleaved as a signal peptide. Asp-161 acts as the Proton donor in catalysis.

It belongs to the glycosyl hydrolase 105 family.

Its subcellular location is the periplasm. In terms of biological role, unsaturated beta-glucuronyl hydrolase involved in ulvan degradation. Ulvan is the main polysaccharide component of the Ulvales (green seaweed) cell wall. It is composed of disaccharide building blocks comprising 3-sulfated rhamnose (Rha3S) linked to D-glucuronic acid (GlcA), L-iduronic acid (IduA), or D-xylose (Xyl). Unsaturated 3S-rhamnoglycuronyl hydrolase works together with ulvan lyases to fully degrade the ulvan polymer, catalyzing specifically the cleavage of the unsaturated 4-deoxy-L-threo-hex-4-enopyranosiduronic acid (deltaUA) of deltaUA-Rha3S disaccharides and deltaUA-Rha3S-Xyl-Rha3S tetrasaccharides, the end products of the ulvan lyase reaction. Also hydrolases deltaUA-Rha3S-IduA-Rha3S and deltaUA-Rha3S-GlcA-Rha3S tetrasaccharidestetrasaccharides. Prefers tetrasaccharides over disaccharides and prefers an uronic residue at subsite +2. In Formosa agariphila (strain DSM 15362 / KCTC 12365 / LMG 23005 / KMM 3901 / M-2Alg 35-1), this protein is Unsaturated 3S-rhamnoglycuronyl hydrolase.